We begin with the raw amino-acid sequence, 280 residues long: MDIILLIQAVIMGIVEGITEFLPISSTGYLILSADLMGFWTKEKVDLFVVVVQFGAILAVIYDYWDRLWQALMGLLTGKAEGMSNPRQLGLSLIVATIPVMIVGFTFADEIKAYLFDPIVVAIMLIIGGLLIFYVENRPKPIIAQEAEDVGLKTALMIGLFQCLALIPGTSRSGATIVGALWLGVSRKASAEFSFFLGIPVIVGAALLDLLKHKDVLTSSEDWLVLGIGTVVSFIVALLCIRLLVAWVSRRDFKIFAWLRIITGVLVLIAAWGFGYQMAG.

8 helical membrane-spanning segments follow: residues 3–23, 45–65, 88–108, 115–135, 150–170, 191–211, 225–245, and 255–275; these read IILL…EFLP, VDLF…YDYW, QLGL…FTFA, LFDP…IFYV, VGLK…IPGT, AEFS…LDLL, VLGI…RLLV, and IFAW…WGFG.

The protein belongs to the UppP family.

Its subcellular location is the cell inner membrane. It catalyses the reaction di-trans,octa-cis-undecaprenyl diphosphate + H2O = di-trans,octa-cis-undecaprenyl phosphate + phosphate + H(+). Functionally, catalyzes the dephosphorylation of undecaprenyl diphosphate (UPP). Confers resistance to bacitracin. The sequence is that of Undecaprenyl-diphosphatase from Psychrobacter arcticus (strain DSM 17307 / VKM B-2377 / 273-4).